A 280-amino-acid polypeptide reads, in one-letter code: Dopamine receptor-interacting protein 1 (280 aa).

In terms of assembly, interacts with DRD1, the dopamine D1 receptor.

Functionally, could be a regulator of the dopamine receptor signaling pathway. This chain is Dopamine receptor-interacting protein 1 (DORIP1), found in Bos taurus (Bovine).